A 387-amino-acid chain; its full sequence is MLADLSEALRERQQEGLYRSRPVLEGPQSPHVTIDGRDFLAFCSNDYLGLANHPALIEAAAEGARCYGVGSGASHLISGHFRAHHELEEALAAFVGLPRTLLFSTGYMANMAVVTALAGRGDAIFADRLNHASLNDAALLSRARFIRYPHLDLDTLARQLETTKARRRLVVTDAVFSMDGDMAPVAELLTLCQRFDAWLLLDDAHGFGVLGERGKGSLYHSQRIERDTPYLIYMATLGKAAGVSGAFVAAQAPVVETLIQHGRTYGYTTAAPPLLAHTLLTSLQLISQESWRRERLALLIERLRQRLHSLPWPLLLSETPIQPLLVGESQEAVRLDLALRERGIWVPAIRPPTVPQGMARLRISLSAVHTEADVDRLGAALRDLAQC.

Arg-19 serves as a coordination point for substrate. Residue 106–107 (GY) coordinates pyridoxal 5'-phosphate. His-131 contacts substrate. The pyridoxal 5'-phosphate site is built by Ser-177, His-205, and Thr-236. Lys-239 carries the N6-(pyridoxal phosphate)lysine modification. Thr-353 contributes to the substrate binding site.

The protein belongs to the class-II pyridoxal-phosphate-dependent aminotransferase family. BioF subfamily. As to quaternary structure, homodimer. Pyridoxal 5'-phosphate is required as a cofactor.

It catalyses the reaction 6-carboxyhexanoyl-[ACP] + L-alanine + H(+) = (8S)-8-amino-7-oxononanoate + holo-[ACP] + CO2. The protein operates within cofactor biosynthesis; biotin biosynthesis. Its function is as follows. Catalyzes the decarboxylative condensation of pimeloyl-[acyl-carrier protein] and L-alanine to produce 8-amino-7-oxononanoate (AON), [acyl-carrier protein], and carbon dioxide. The protein is 8-amino-7-oxononanoate synthase of Nitrosomonas europaea (strain ATCC 19718 / CIP 103999 / KCTC 2705 / NBRC 14298).